The sequence spans 454 residues: Mitochondrial dynamics protein MID49 (454 aa).

Over 1-22 the chain is Mitochondrial intermembrane; the sequence is MAEFSQKRGKRRGDEGLGSMVD. The chain crosses the membrane as a helical span at residues 23–43; the sequence is FLLANARLVLGVGGAAVLGIA. The Cytoplasmic portion of the chain corresponds to 44–454; the sequence is TLAVKRFIDR…SGLQEPEGLL (411 aa). A disordered region spans residues 76–119; that stretch reads ATPHLQPRPPPAALSQPVLPLAPSSSAPEGPAKSDPEVTPQLSS. Low complexity predominate over residues 88 to 108; sequence ALSQPVLPLAPSSSAPEGPAK.

This sequence belongs to the MID49/MID51 family. Interacts with DNM1L.

It localises to the mitochondrion outer membrane. Functionally, mitochondrial outer membrane protein which regulates mitochondrial organization. It is required for mitochondrial fission and promotes the recruitment and association of the fission mediator dynamin-related protein 1 (DNM1L) to the mitochondrial surface independently of the mitochondrial fission FIS1 and MFF proteins. Regulates DNM1L GTPase activity. This is Mitochondrial dynamics protein MID49 (MIEF2) from Pongo abelii (Sumatran orangutan).